The sequence spans 531 residues: Tubulin-folding cofactor E (531 aa).

The 45-residue stretch at 32–76 (GDVEGYSGTWIGVDWDQDGDGKHNGSVNGVFYFNGRSQSSASFVR) folds into the CAP-Gly domain. LRR repeat units lie at residues 84–109 (ITLL…MYVL), 159–183 (LPNL…ALCE), 185–213 (LPAL…NIRV), 233–256 (LPGI…SSSD), 260–284 (FNSL…KLSQ), 285–308 (LPCL…VNGT), 318–342 (FPSL…ALNG), 344–366 (PQLV…GVPR), and 474–497 (VGKL…LFLQ).

Belongs to the TBCE family. In terms of assembly, supercomplex made of cofactors A to E. Cofactors A and D function by capturing and stabilizing tubulin in a quasi-native conformation. Cofactor E binds to the cofactor D-tubulin complex; interaction with cofactor C then causes the release of tubulin polypeptides that are committed to the native state.

Its subcellular location is the cytoplasm. Its function is as follows. Essential tubulin-folding protein involved in the tubulin folding pathway. Not essential for cell viability. Probably involved in the binding of alpha-tubulin in the multimeric supercomplex. This chain is Tubulin-folding cofactor E (TFCE), found in Arabidopsis thaliana (Mouse-ear cress).